The sequence spans 634 residues: Putative ABC transporter ATP-binding protein MG015 homolog (634 aa).

6 helical membrane-spanning segments follow: residues 54 to 74 (VLYV…NSIL), 111 to 131 (LTIV…FNVA), 189 to 209 (VGGQ…ILFV), 213 to 233 (VIAL…FLFL), 296 to 316 (VFIY…SISI), and 325 to 345 (IPSF…IAAL). One can recognise an ABC transmembrane type-1 domain in the interval 54–364 (VLYVMVCAIF…IFSLWNLIQL (311 aa)). The region spanning 397-631 (IRFEKVVFGY…NGFYARLKRS (235 aa)) is the ABC transporter domain. 430–437 (GPTGAGKS) provides a ligand contact to ATP.

It belongs to the ABC transporter superfamily.

The protein resides in the cell membrane. The chain is Putative ABC transporter ATP-binding protein MG015 homolog from Mycoplasma pneumoniae (strain ATCC 29342 / M129 / Subtype 1) (Mycoplasmoides pneumoniae).